We begin with the raw amino-acid sequence, 225 residues long: LHFPL tetraspan subfamily member 2a protein (225 aa).

A run of 4 helical transmembrane segments spans residues 11–31 (MLWT…FLST), 99–119 (IFLA…IFTM), 129–149 (IFNV…VGLV), and 178–198 (AGWA…CAVF).

It belongs to the LHFP family.

The protein resides in the membrane. Its function is as follows. Plays a role in fertility. Involved in distal reproductive tract development. The sequence is that of LHFPL tetraspan subfamily member 2a protein from Danio rerio (Zebrafish).